A 512-amino-acid polypeptide reads, in one-letter code: 2,3-bisphosphoglycerate-independent phosphoglycerate mutase (512 aa).

Asp-11 and Ser-61 together coordinate Mn(2+). The active-site Phosphoserine intermediate is Ser-61. Substrate is bound by residues His-122, 152-153, Arg-184, Arg-190, 259-262, and Lys-332; these read RD and RADR. The Mn(2+) site is built by Asp-399, His-403, Asp-440, His-441, and His-459.

This sequence belongs to the BPG-independent phosphoglycerate mutase family. As to quaternary structure, monomer. Mn(2+) is required as a cofactor.

It catalyses the reaction (2R)-2-phosphoglycerate = (2R)-3-phosphoglycerate. Its pathway is carbohydrate degradation; glycolysis; pyruvate from D-glyceraldehyde 3-phosphate: step 3/5. Functionally, catalyzes the interconversion of 2-phosphoglycerate and 3-phosphoglycerate. The sequence is that of 2,3-bisphosphoglycerate-independent phosphoglycerate mutase from Francisella tularensis subsp. tularensis (strain WY96-3418).